The primary structure comprises 194 residues: Peroxiredoxin 2 (194 aa).

Positions 2 to 160 constitute a Thioredoxin domain; it reads PQLQKPAPAF…TLRLVQAFQY (159 aa). The active-site Cysteine sulfenic acid (-SOH) intermediate is the cysteine 47. Position 193 is a phosphothreonine (threonine 193). Serine 194 carries the phosphoserine modification.

Belongs to the peroxiredoxin family. AhpC/Prx1 subfamily. As to quaternary structure, homodimer; disulfide-linked, upon oxidation. 5 homodimers assemble to form a ring-like decamer. Also exists as a monomer. In terms of processing, the enzyme can be inactivated by further oxidation of the cysteine sulfenic acid (C(P)-SOH) to sulphinic acid (C(P)-SO2H) instead of its condensation to a disulfide bond. It can be reactivated by forming a transient disulfide bond with sulfiredoxin SRXN1, which reduces the cysteine sulfinic acid in an ATP- and Mg-dependent manner. Conjugated to URM1, a ubiquitin-like protein. As to expression, detected in the head and body (at protein level).

The protein resides in the cytoplasm. It carries out the reaction a hydroperoxide + [thioredoxin]-dithiol = an alcohol + [thioredoxin]-disulfide + H2O. Functionally, thiol-specific peroxidase that catalyzes the reduction of hydrogen peroxide and organic hydroperoxides to water and alcohols, respectively. Plays a role in cell protection against oxidative stress by detoxifying peroxides and as sensor of hydrogen peroxide-mediated signaling events. Might participate in the signaling cascades of growth factors and tumor necrosis factor-alpha by regulating the intracellular concentrations of H(2)O(2). Reduces an intramolecular disulfide bond in GDPD5 that gates the ability to GDPD5 to drive postmitotic motor neuron differentiation. This chain is Peroxiredoxin 2, found in Drosophila melanogaster (Fruit fly).